The primary structure comprises 241 residues: Uracil-DNA glycosylase (241 aa).

Asp71 functions as the Proton acceptor in the catalytic mechanism. The interval 221-241 (ISPIDWSLPPRNELDTTSAGA) is disordered.

It belongs to the uracil-DNA glycosylase (UDG) superfamily. UNG family.

The protein resides in the cytoplasm. It carries out the reaction Hydrolyzes single-stranded DNA or mismatched double-stranded DNA and polynucleotides, releasing free uracil.. In terms of biological role, excises uracil residues from the DNA which can arise as a result of misincorporation of dUMP residues by DNA polymerase or due to deamination of cytosine. This Xanthomonas oryzae pv. oryzae (strain MAFF 311018) protein is Uracil-DNA glycosylase.